Reading from the N-terminus, the 351-residue chain is Selenide, water dikinase (351 aa).

The active site involves Sec15. Position 15 (Sec15) is a non-standard amino acid, selenocysteine. ATP-binding positions include Lys18 and 47 to 49 (DNE). Asp50 contributes to the Mg(2+) binding site. ATP contacts are provided by residues Asp67, Asp90, and 138 to 140 (GHS). Asp90 contributes to the Mg(2+) binding site. Asp227 provides a ligand contact to Mg(2+).

The protein belongs to the selenophosphate synthase 1 family. Class I subfamily. Homodimer. It depends on Mg(2+) as a cofactor.

The catalysed reaction is hydrogenselenide + ATP + H2O = selenophosphate + AMP + phosphate + 2 H(+). In terms of biological role, synthesizes selenophosphate from selenide and ATP. This is Selenide, water dikinase from Nitratidesulfovibrio vulgaris (strain ATCC 29579 / DSM 644 / CCUG 34227 / NCIMB 8303 / VKM B-1760 / Hildenborough) (Desulfovibrio vulgaris).